Consider the following 107-residue polypeptide: UPF0145 protein BVU_2335 (107 aa).

The protein belongs to the UPF0145 family.

This Phocaeicola vulgatus (strain ATCC 8482 / DSM 1447 / JCM 5826 / CCUG 4940 / NBRC 14291 / NCTC 11154) (Bacteroides vulgatus) protein is UPF0145 protein BVU_2335.